Here is a 562-residue protein sequence, read N- to C-terminus: Urocanate hydratase (562 aa).

NAD(+) is bound by residues 53 to 54, Gln-131, 177 to 179, Glu-197, Arg-202, 243 to 244, 268 to 272, 278 to 279, and Tyr-327; these read GG, GMG, NA, QTSAH, and YL. Cys-415 is an active-site residue. Gly-497 serves as a coordination point for NAD(+).

This sequence belongs to the urocanase family. It depends on NAD(+) as a cofactor.

It is found in the cytoplasm. It carries out the reaction 4-imidazolone-5-propanoate = trans-urocanate + H2O. Its pathway is amino-acid degradation; L-histidine degradation into L-glutamate; N-formimidoyl-L-glutamate from L-histidine: step 2/3. Functionally, catalyzes the conversion of urocanate to 4-imidazolone-5-propionate. This Chelativorans sp. (strain BNC1) protein is Urocanate hydratase.